The primary structure comprises 418 residues: Hepatic and glial cell adhesion molecule (418 aa).

Positions M1–G33 are cleaved as a signal peptide. Positions V34–V141 constitute an Ig-like V-type domain. At V34–S240 the chain is on the extracellular side. N35, N138, N167, and N189 each carry an N-linked (GlcNAc...) asparagine glycan. Residues P148 to T234 form the Ig-like C2-type domain. A disulfide bridge connects residues C168 and C217. A helical membrane pass occupies residues L241–A261. The Cytoplasmic segment spans residues C262–A418. The interval K271–A418 is disordered. The residue at position 280 (S280) is a Phosphoserine. The segment covering S287–N308 has biased composition (basic and acidic residues). S352 and S379 each carry phosphoserine. Over residues G385–A400 the composition is skewed to low complexity.

Homodimer. Dimer formation occurs predominantly through cis interactions on the cell surface. Part of a complex containing MLC1, TRPV4, AQP4 and ATP1B1. Interacts with CLCN2. Post-translationally, N-glycosylated.

It localises to the cytoplasm. It is found in the cell membrane. Functionally, involved in regulating cell motility and cell-matrix interactions. May inhibit cell growth through suppression of cell proliferation. In glia, associates and targets CLCN2 at astrocytic processes and myelinated fiber tracts where it may regulate transcellular chloride flux involved in neuron excitability. This is Hepatic and glial cell adhesion molecule from Bos taurus (Bovine).